A 557-amino-acid chain; its full sequence is Potassium-transporting ATPase potassium-binding subunit (557 aa).

Helical transmembrane passes span 5 to 25 (GFLL…PLGS), 63 to 83 (LCAI…MLLG), 132 to 152 (GLTV…FALI), 170 to 190 (LLRI…LFFI), 253 to 273 (FVQM…FGEV), 283 to 303 (LLWA…WAEV), 329 to 349 (VLVS…AVIA), 356 to 376 (ALGG…FGGV), 379 to 399 (GLYG…LMIG), 416 to 436 (LTAL…ALAM), 484 to 504 (LLAF…MAIA), and 526 to 546 (LFVG…FIPA).

It belongs to the KdpA family. In terms of assembly, the system is composed of three essential subunits: KdpA, KdpB and KdpC.

It localises to the cell inner membrane. Part of the high-affinity ATP-driven potassium transport (or Kdp) system, which catalyzes the hydrolysis of ATP coupled with the electrogenic transport of potassium into the cytoplasm. This subunit binds the periplasmic potassium ions and delivers the ions to the membrane domain of KdpB through an intramembrane tunnel. The protein is Potassium-transporting ATPase potassium-binding subunit of Escherichia coli (strain K12 / MC4100 / BW2952).